A 279-amino-acid chain; its full sequence is MSLFDLFRGFFGFSGPRSHRDPFFGGMTRDEDEDDEEEEEEGVTWGRGNSRFEGPQSPEEFSFGFSFSPGGGMRFHDNFGFDDLVRDFNNIFSEMGAWTLPSRPPELPGPESETPGERRQEGQTLRDSMLKYPDSHQPKIFGGGLESDARSESSKPAPDWGPQRPFHRFDDTWPVTPHSRAREDNDLDTQVSQEGLGPVLQPQPKSYFKSVSVTKITKPDGTVEERRTVVDSEGRKETTVTHQEAGSSPRDGPESPTPPSLDDSSSILDLFLGRWFRSR.

Ser2 bears the N-acetylserine mark. A required for localization in mitochondria region spans residues Ser2–Gly42. Disordered stretches follow at residues Pro16–Phe67 and Ala97–Ser265. The span at Asp30–Gly42 shows a compositional bias: acidic residues. The segment covering Ser57–Phe67 has biased composition (low complexity). An involved in HCLS1 binding region spans residues Thr114–Arg279. The involved in CASP9 binding stretch occupies residues Val175–Ser206. Positions Thr176–Ser247 are involved in GNA13 binding. Positions Glu183 to Arg279 are required for localization in sarcoplasmic reticulum. Positions Asp184–Arg279 are involved in PKD2 binding. Position 192 is a phosphoserine (Ser192). An involved in PLN binding region spans residues Gln203 to Glu225. The interval Gln203 to Ala245 is involved in ATP2A2 binding. The interval Ser210–Arg279 is mediates interaction with UCP3. The span at Thr217–Thr239 shows a compositional bias: basic and acidic residues. The tract at residues Leu270–Arg279 is required for ITGB6 binding.

It belongs to the HAX1 family. In terms of assembly, interacts with ABCB1, ABCB4 and ABCB11. Directly associates with HCLS1/HS1, through binding to its N-terminal region. Interacts with CTTN. Interacts with PKD2. Interacts with GNA13. Interacts with CASP9. Interacts with ITGB6. Interacts with PLN and ATP2A2; these interactions are inhibited by calcium. Interacts with GRB7. Interacts (via C-terminus) with XIAP/BIRC4 (via BIR 2 domain and BIR 3 domain) and this interaction blocks ubiquitination of XIAP/BIRC4. Interacts with TPC2. Interacts with KCNC3. Interacts with XPO1. Interacts with RNF217. Interacts with UCP3; the interaction is direct and calcium-dependent. Interacts with MAPRE2; this interaction regulates cell migration in keratinocytes.

Its subcellular location is the mitochondrion matrix. It localises to the endoplasmic reticulum. The protein resides in the nucleus membrane. It is found in the cytoplasmic vesicle. The protein localises to the cytoplasm. Its subcellular location is the cell cortex. It localises to the cell membrane. The protein resides in the sarcoplasmic reticulum. It is found in the P-body. The protein localises to the nucleus. In terms of biological role, recruits the Arp2/3 complex to the cell cortex and regulates reorganization of the cortical actin cytoskeleton via its interaction with KCNC3 and the Arp2/3 complex. Slows down the rate of inactivation of KCNC3 channels. Promotes GNA13-mediated cell migration. Involved in the clathrin-mediated endocytosis pathway. May be involved in internalization of ABC transporters such as ABCB11. May inhibit CASP9 and CASP3. Promotes cell survival. May regulate intracellular calcium pools. In Bos taurus (Bovine), this protein is HCLS1-associated protein X-1 (HAX1).